The following is a 112-amino-acid chain: MKKQYRLRKNWEFDLVLKNKKFIANKYVIVYYKKASAFKVGITVPKKFANSVGRNYHKRQMKAIVHKMNLYNYPYEMVIIIRKNFINCNFLTKVIEIEKIFTQFKQQNEKIK.

The protein belongs to the RnpA family. Consists of a catalytic RNA component (M1 or rnpB) and a protein subunit.

It carries out the reaction Endonucleolytic cleavage of RNA, removing 5'-extranucleotides from tRNA precursor.. RNaseP catalyzes the removal of the 5'-leader sequence from pre-tRNA to produce the mature 5'-terminus. It can also cleave other RNA substrates such as 4.5S RNA. The protein component plays an auxiliary but essential role in vivo by binding to the 5'-leader sequence and broadening the substrate specificity of the ribozyme. In Mycoplasmopsis synoviae (strain 53) (Mycoplasma synoviae), this protein is Ribonuclease P protein component.